Reading from the N-terminus, the 182-residue chain is Inorganic pyrophosphatase (182 aa).

Positions 30, 44, and 56 each coordinate substrate. Residues Asp66, Asp71, and Asp103 each contribute to the Mg(2+) site. Tyr142 serves as a coordination point for substrate.

This sequence belongs to the PPase family. Homohexamer. Mg(2+) is required as a cofactor.

The protein resides in the cytoplasm. The enzyme catalyses diphosphate + H2O = 2 phosphate + H(+). Its function is as follows. Catalyzes the hydrolysis of inorganic pyrophosphate (PPi) forming two phosphate ions. The protein is Inorganic pyrophosphatase of Buchnera aphidicola subsp. Acyrthosiphon pisum (strain APS) (Acyrthosiphon pisum symbiotic bacterium).